The primary structure comprises 427 residues: Actin-related protein 3 (427 aa).

This sequence belongs to the actin family. ARP3 subfamily. Component of the Arp2/3 complex composed of arp2, act2, arc1/p41-ARC, arc2/p34-ARC, arc3/p21-ARC, arc4/p20-ARC and arc5/p16-ARC.

It is found in the cytoplasm. Its subcellular location is the cytoskeleton. The protein resides in the actin patch. In terms of biological role, functions as ATP-binding component of the Arp2/3 complex which is involved in regulation of actin polymerization and together with an activating nucleation-promoting factor (NPF) mediates the formation of branched actin networks. Seems to contact the pointed end of the daughter actin filament. May be involved in cytokinesis. The chain is Actin-related protein 3 (act2) from Schizosaccharomyces pombe (strain 972 / ATCC 24843) (Fission yeast).